Here is a 562-residue protein sequence, read N- to C-terminus: Urocanate hydratase (562 aa).

NAD(+) is bound by residues 52-53, Gln130, 176-178, Glu196, Arg201, 242-243, 263-267, 273-274, and Tyr322; these read GG, GMG, NA, QTSAH, and YL. Cys410 is an active-site residue. Gly492 contributes to the NAD(+) binding site.

It belongs to the urocanase family. NAD(+) is required as a cofactor.

The protein resides in the cytoplasm. It carries out the reaction 4-imidazolone-5-propanoate = trans-urocanate + H2O. It functions in the pathway amino-acid degradation; L-histidine degradation into L-glutamate; N-formimidoyl-L-glutamate from L-histidine: step 2/3. Its function is as follows. Catalyzes the conversion of urocanate to 4-imidazolone-5-propionate. In Klebsiella pneumoniae (strain 342), this protein is Urocanate hydratase.